Here is a 987-residue protein sequence, read N- to C-terminus: Eukaryotic translation initiation factor 3 subunit A (987 aa).

A coiled-coil region spans residues L93–D122. Positions L316–I513 constitute a PCI domain. 2 coiled-coil regions span residues T556–R742 and L797–L858. Residues Q808–L859 are compositionally biased toward basic and acidic residues. Residues Q808 to R987 are disordered. The segment covering P872–A894 has biased composition (low complexity). Composition is skewed to polar residues over residues T905 to S916 and T976 to R987.

This sequence belongs to the eIF-3 subunit A family. Component of the eukaryotic translation initiation factor 3 (eIF-3) complex. Binds to the translation initiation factor TIF3H1.

Its subcellular location is the cytoplasm. Functionally, RNA-binding component of the eukaryotic translation initiation factor 3 (eIF-3) complex, which is involved in protein synthesis of a specialized repertoire of mRNAs and, together with other initiation factors, stimulates binding of mRNA and methionyl-tRNAi to the 40S ribosome. The eIF-3 complex specifically targets and initiates translation of a subset of mRNAs involved in cell proliferation. The chain is Eukaryotic translation initiation factor 3 subunit A (TIF3A1) from Arabidopsis thaliana (Mouse-ear cress).